Reading from the N-terminus, the 270-residue chain is uncharacterized protein (270 aa).

Residues 1-22 (MEYIKKIALYMSVLLLIIFIGG) form the signal peptide. Cys-23 carries N-palmitoyl cysteine lipidation. Residue Cys-23 is the site of S-diacylglycerol cysteine attachment.

Belongs to the staphylococcal tandem lipoprotein family.

The protein localises to the cell membrane. This is an uncharacterized protein from Staphylococcus aureus (strain N315).